The chain runs to 508 residues: CXXC-type zinc finger protein 1 (508 aa).

The CXXC-type zinc finger occupies 10 to 47 (EDVWKERCMNCIRCNDEKNCGTCWPCRNGKTCDMRKCF). Disordered regions lie at residues 95-156 (QQVE…EPDK) and 453-508 (KSQS…TQNN). Composition is skewed to low complexity over residues 113–123 (AAAAAQQRKAN) and 454–481 (SQSTSSSASAHGATTPISSTSSSSSSSS).

As to quaternary structure, component of the SET2 complex (also known as the SET1/COMPASS complex), which contains at least set-2, swd-2.1, cfp-1, rbbp-5, wdr-5.1, dpy-30 and ash-2. Within the complex, interacts with wdr-5.1, ash-2 and dpy-30. Also interacts with the SIN3S complex, which contains at least sin-3, hda-1, athp-1 and mrg-1. Interacts with sin-3, hda-1 and mrg-1.

The protein localises to the nucleus. Functionally, transcriptional activator that exhibits a unique DNA binding specificity for CpG motifs; enriched at promoters containing the trimethylation mark on histone H3 'Lys-4' (H3K4me3). Forms part of the SET2 complex and interacts with the SIN3S HDAC complex at promoters. Required for H3K4 trimethylation and plays a repressive role in the expression of heat shock and salt-inducible genes. Required for fertility, in cooperation with class I histone deacetylases (HDACs). The sequence is that of CXXC-type zinc finger protein 1 from Caenorhabditis elegans.